The chain runs to 318 residues: Esterase FVEG_12639 (318 aa).

Active-site residues include S156, D255, and H285.

Belongs to the AB hydrolase 3 family.

In terms of biological role, esterase; part of the Fusarium detoxification of benzoxazolinone cluster 2 (FDB2) involved in the degradation of benzoxazolinones produced by the host plant. Maize, wheat, and rye produce the 2 benzoxazinone phytoanticipins 2,4-dihy-droxy-7-methoxy-1,4-benzoxazin-3-one (DIMBOA) and 2,4-dihydroxy-1,4-benzoxazin-3-one (DIBOA) that, due to their inherent instability once released, spontaneously degrade to the more stable corresponding benzoxazolinones, 6-methoxy-2-benzoxazolinone (MBOA) and 2-benzoxazolinone (BOA), respectively. The first step in the detoxification of benzoxazolinones involves the hydrolysis of the cyclic ester bond of benzoxazolinones by the FDB1 cluster gamma-lactamase MBL1 to aminophenols. MBL1 is able to convert BOA into 2-aminophenol (2-AP), as well as MBOA into 5-methoxy-2-aminophenol (2-AMP). The FDB2 cluster N-malonyltransferase FDB2/NAT1 then metabolizes aminophenols via N-malonylation to non-toxic malonamic acids. FDB2/NAT1 converts 2-AP into N-(2-hydroxyphenyl) malonamic acid (HPMA) and 2-AMP into N-(2-hydroxy-4-methoxyphenyl) malonamic acid (HMPMA). The duplicated dienlactone hydrolases DLH1 and DLH2 may provide redundant function for hydrolyzing the lactone moiety in the BOA molecule. The roles of the amidases an other enzymes encoded by the 2 FDB clusters have not been identified so far. The sequence is that of Esterase FVEG_12639 from Gibberella moniliformis (strain M3125 / FGSC 7600) (Maize ear and stalk rot fungus).